Here is a 126-residue protein sequence, read N- to C-terminus: Protein mmf2, mitochondrial (126 aa).

The protein belongs to the RutC family.

The protein resides in the mitochondrion. Its subcellular location is the cytoplasm. Functionally, plays a role in the maintenance of mitochondrial DNA. The polypeptide is Protein mmf2, mitochondrial (mmf2) (Schizosaccharomyces pombe (strain 972 / ATCC 24843) (Fission yeast)).